The primary structure comprises 260 residues: Carbonic anhydrase 2 (260 aa).

Residue Ser2 is modified to N-acetylserine. Ser2 is subject to Phosphoserine. The region spanning 3–259 is the Alpha-carbonic anhydrase domain; that stretch reads HHWGYGKHNG…LKNRQVRGFP (257 aa). His64 acts as the Proton donor/acceptor in catalysis. Residues His94, His96, and His119 each coordinate Zn(2+). Phosphoserine is present on residues Ser165 and Ser172. A substrate-binding site is contributed by 198-199; it reads TT.

Belongs to the alpha-carbonic anhydrase family. Interacts with SLC4A4. Interaction with SLC4A7 regulates SLC4A7 transporter activity. Requires Zn(2+) as cofactor.

It localises to the cytoplasm. The protein localises to the cell membrane. It carries out the reaction hydrogencarbonate + H(+) = CO2 + H2O. The enzyme catalyses urea = cyanamide + H2O. With respect to regulation, inhibited by acetazolamide. Its function is as follows. Catalyzes the reversible hydration of carbon dioxide. Can also hydrate cyanamide to urea. Involved in the regulation of fluid secretion into the anterior chamber of the eye. Essential for bone resorption and osteoclast differentiation. Contributes to intracellular pH regulation in the duodenal upper villous epithelium during proton-coupled peptide absorption. Stimulates the chloride-bicarbonate exchange activity of SLC26A6. The protein is Carbonic anhydrase 2 (CA2) of Bos taurus (Bovine).